Here is a 210-residue protein sequence, read N- to C-terminus: Glutathione S-transferase 2 (210 aa).

In terms of domain architecture, GST N-terminal spans 1–80 (MDFYYLPLSA…YLVEKYGKQN (80 aa)). Residues Ser-9, 50–52 (HTI), and 64–66 (ESR) each bind glutathione. The GST C-terminal domain maps to 87 to 208 (CPKKRALINQ…AGCLEMKKYF (122 aa)).

This sequence belongs to the GST superfamily. Theta family. Homodimer.

The catalysed reaction is RX + glutathione = an S-substituted glutathione + a halide anion + H(+). Functionally, conjugation of reduced glutathione to a wide number of exogenous and endogenous hydrophobic electrophiles. The chain is Glutathione S-transferase 2 (Gst2) from Musca domestica (House fly).